Here is a 476-residue protein sequence, read N- to C-terminus: MNSAVEAQLAELGIEGYLKQHQYKSLLRFLTCGSVDDGKSTLIGRLLHDSKQIYEDQLAAVHSDSQRVGTTGEKPDLALLVDGLQAEREQGITIDVAYRYFSTQKRKFIIADTPGHEQYTRNMATGASTCDLAVILVDARKGILDQTRRHSFISNLLGLKHFVVAINKMDLVDYSQARFEEIRDEYLKFSENLTGDIDIQIIPISALEGDNVVDKGQNLNWFEGPSLLELLETVDVDYEKGAGEFRFPVQYVNRPNLDFRGFAGTVSSGSVKVGDAIKALPSGKTSTVARIVTFDGDIEEAQAGLAVTLTLNDEIDISRGDLIVLENAQVQTTNHLLADVVWMTEQPLQPGRDYDIKIAGKKTVGHVESIRHQYDINNLSTHGAAELPLNGIGLCEWSLNESVALDNYQDCADTGGFIIIDRLTNVTVGAGMVKESLTELERGLADVSAFELELNALVRKHFPHWEAKDLSQLLKK.

Positions 24–239 (KSLLRFLTCG…LLETVDVDYE (216 aa)) constitute a tr-type G domain. Residues 33–40 (GSVDDGKS) form a G1 region. Residue 33–40 (GSVDDGKS) participates in GTP binding. The interval 91–95 (GITID) is G2. Residues 112 to 115 (DTPG) are G3. Residues 112–116 (DTPGH) and 167–170 (NKMD) each bind GTP. Residues 167-170 (NKMD) are G4. A G5 region spans residues 205–207 (SAL).

The protein belongs to the TRAFAC class translation factor GTPase superfamily. Classic translation factor GTPase family. CysN/NodQ subfamily. In terms of assembly, heterodimer composed of CysD, the smaller subunit, and CysN.

The catalysed reaction is sulfate + ATP + H(+) = adenosine 5'-phosphosulfate + diphosphate. Its pathway is sulfur metabolism; hydrogen sulfide biosynthesis; sulfite from sulfate: step 1/3. In terms of biological role, with CysD forms the ATP sulfurylase (ATPS) that catalyzes the adenylation of sulfate producing adenosine 5'-phosphosulfate (APS) and diphosphate, the first enzymatic step in sulfur assimilation pathway. APS synthesis involves the formation of a high-energy phosphoric-sulfuric acid anhydride bond driven by GTP hydrolysis by CysN coupled to ATP hydrolysis by CysD. The sequence is that of Sulfate adenylyltransferase subunit 1 from Vibrio parahaemolyticus serotype O3:K6 (strain RIMD 2210633).